A 522-amino-acid polypeptide reads, in one-letter code: Peptide methionine sulfoxide reductase MsrA/MsrB (522 aa).

Residues 17 to 174 enclose the Thioredoxin domain; that stretch reads LALGACSPKI…ALALIRDPNA (158 aa). Cys68 and Cys71 form a disulfide bridge. Residues 199 to 354 form a peptide methionine sulfoxide reductase A region; the sequence is RTIYLAGGCF…PNGYCHIDIR (156 aa). Cys207 is an active-site residue. Residues 383-506 enclose the MsrB domain; the sequence is DAELKRTLTE…NGASLKFIPL (124 aa). Cys440 and Cys495 are oxidised to a cystine. Cys495 serves as the catalytic Nucleophile.

This sequence in the N-terminal section; belongs to the thioredoxin family. It in the central section; belongs to the MsrA Met sulfoxide reductase family. The protein in the C-terminal section; belongs to the MsrB Met sulfoxide reductase family.

It catalyses the reaction L-methionyl-[protein] + [thioredoxin]-disulfide + H2O = L-methionyl-(S)-S-oxide-[protein] + [thioredoxin]-dithiol. The catalysed reaction is [thioredoxin]-disulfide + L-methionine + H2O = L-methionine (S)-S-oxide + [thioredoxin]-dithiol. It carries out the reaction L-methionyl-[protein] + [thioredoxin]-disulfide + H2O = L-methionyl-(R)-S-oxide-[protein] + [thioredoxin]-dithiol. In terms of biological role, has an important function as a repair enzyme for proteins that have been inactivated by oxidation. Catalyzes the reversible oxidation-reduction of methionine sulfoxide in proteins to methionine. This is Peptide methionine sulfoxide reductase MsrA/MsrB (msrAB) from Neisseria meningitidis serogroup B (strain ATCC BAA-335 / MC58).